The primary structure comprises 213 residues: Cytochrome b-c1 complex subunit Rieske, mitochondrial (213 aa).

The transit peptide at 1 to 29 (MSSLAFRTLRNGLGLKSSVRALSTTTTTL) directs the protein to the mitochondrion. Residues 30–47 (SNYQQPDYSSYLNNKSGQ) lie on the Mitochondrial matrix side of the membrane. A helical transmembrane segment spans residues 48–77 (GSRNFTYFMVGSMGLLSAAGAKSTVEAFLS). Residues 78–213 (SFAASADVLA…FTDDETLLVG (136 aa)) are Mitochondrial intermembrane-facing. Positions 116 to 211 (RHRTADEIEE…YDFTDDETLL (96 aa)) constitute a Rieske domain. The [2Fe-2S] cluster site is built by Cys156, His158, Cys175, and His178. Cysteines 161 and 177 form a disulfide.

It belongs to the Rieske iron-sulfur protein family. As to quaternary structure, component of the ubiquinol-cytochrome c oxidoreductase (cytochrome b-c1 complex, complex III, CIII), a multisubunit enzyme composed of 10 subunits. The complex is composed of 3 respiratory subunits cytochrome b (COB), cytochrome c1 (CYT1) and Rieske protein (RIP1), 2 core protein subunits COR1 and QCR2, and 5 low-molecular weight protein subunits QCR6, QCR7, QCR8, QCR9 and QCR10. The complex exists as an obligatory dimer and forms supercomplexes (SCs) in the inner mitochondrial membrane with a monomer or a dimer of cytochrome c oxidase (complex IV, CIV), resulting in 2 different assemblies (supercomplexes III(2)IV and III(2)IV(2)). [2Fe-2S] cluster is required as a cofactor.

It localises to the mitochondrion inner membrane. The catalysed reaction is a quinol + 2 Fe(III)-[cytochrome c](out) = a quinone + 2 Fe(II)-[cytochrome c](out) + 2 H(+)(out). Component of the ubiquinol-cytochrome c oxidoreductase, a multisubunit transmembrane complex that is part of the mitochondrial electron transport chain which drives oxidative phosphorylation. The complex plays an important role in the uptake of multiple carbon sources present in different host niches. This is Cytochrome b-c1 complex subunit Rieske, mitochondrial from Candida albicans (strain SC5314 / ATCC MYA-2876) (Yeast).